A 146-amino-acid chain; its full sequence is 3-hydroxyacyl-[acyl-carrier-protein] dehydratase FabZ (146 aa).

Histidine 49 is a catalytic residue.

Belongs to the thioester dehydratase family. FabZ subfamily.

It localises to the cytoplasm. It carries out the reaction a (3R)-hydroxyacyl-[ACP] = a (2E)-enoyl-[ACP] + H2O. Its function is as follows. Involved in unsaturated fatty acids biosynthesis. Catalyzes the dehydration of short chain beta-hydroxyacyl-ACPs and long chain saturated and unsaturated beta-hydroxyacyl-ACPs. This Pseudomonas syringae pv. tomato (strain ATCC BAA-871 / DC3000) protein is 3-hydroxyacyl-[acyl-carrier-protein] dehydratase FabZ.